The following is a 447-amino-acid chain: Tubulin beta-1 chain (447 aa).

8 residues coordinate GTP: Gln11, Glu69, Ser138, Gly142, Thr143, Gly144, Asn204, and Asn226. Glu69 contributes to the Mg(2+) binding site.

It belongs to the tubulin family. In terms of assembly, dimer of alpha and beta chains. A typical microtubule is a hollow water-filled tube with an outer diameter of 25 nm and an inner diameter of 15 nM. Alpha-beta heterodimers associate head-to-tail to form protofilaments running lengthwise along the microtubule wall with the beta-tubulin subunit facing the microtubule plus end conferring a structural polarity. Microtubules usually have 13 protofilaments but different protofilament numbers can be found in some organisms and specialized cells. It depends on Mg(2+) as a cofactor.

Its subcellular location is the cytoplasm. The protein resides in the cytoskeleton. In terms of biological role, tubulin is the major constituent of microtubules, a cylinder consisting of laterally associated linear protofilaments composed of alpha- and beta-tubulin heterodimers. Microtubules grow by the addition of GTP-tubulin dimers to the microtubule end, where a stabilizing cap forms. Below the cap, tubulin dimers are in GDP-bound state, owing to GTPase activity of alpha-tubulin. This Geotrichum candidum (Oospora lactis) protein is Tubulin beta-1 chain.